The following is a 479-amino-acid chain: Poly(A) polymerase catalytic subunit (479 aa).

Residues Asp-202 and Asp-204 contribute to the active site. The Ca(2+) site is built by Asp-202, Asp-204, and Asp-253.

It belongs to the poxviridae poly(A) polymerase catalytic subunit family. Heterodimer of a large (catalytic) subunit and a small (regulatory) subunit.

It catalyses the reaction RNA(n) + ATP = RNA(n)-3'-adenine ribonucleotide + diphosphate. In terms of biological role, polymerase that creates the 3'-poly(A) tail of mRNA's. This chain is Poly(A) polymerase catalytic subunit (OPG063), found in Mus musculus (Mouse).